The primary structure comprises 212 residues: Thymidylate kinase (212 aa).

Glycine 11–serine 18 provides a ligand contact to ATP.

This sequence belongs to the thymidylate kinase family.

The enzyme catalyses dTMP + ATP = dTDP + ADP. Its function is as follows. Phosphorylation of dTMP to form dTDP in both de novo and salvage pathways of dTTP synthesis. This chain is Thymidylate kinase, found in Vibrio vulnificus (strain CMCP6).